Here is a 799-residue protein sequence, read N- to C-terminus: Histidine biosynthesis trifunctional protein (799 aa).

Positions 1–229 (MVLPILPLID…FIVEQENVGF (229 aa)) are phosphoribosyl-AMP cyclohydrolase. The phosphoribosyl-ATP pyrophosphohydrolase stretch occupies residues 230–312 (CHLETMSCFG…FYFALAKLVA (83 aa)). A histidinol dehydrogenase region spans residues 313–799 (NDVSLKDVEN…KLGLIPKDFQ (487 aa)). Q618 and H621 together coordinate Zn(2+). Active-site residues include E687 and H688. Zn(2+) is bound by residues D721 and H780.

In the C-terminal section; belongs to the histidinol dehydrogenase family. Zn(2+) serves as cofactor.

It carries out the reaction 1-(5-phospho-beta-D-ribosyl)-5'-AMP + H2O = 1-(5-phospho-beta-D-ribosyl)-5-[(5-phospho-beta-D-ribosylamino)methylideneamino]imidazole-4-carboxamide. The enzyme catalyses 1-(5-phospho-beta-D-ribosyl)-ATP + H2O = 1-(5-phospho-beta-D-ribosyl)-5'-AMP + diphosphate + H(+). The catalysed reaction is L-histidinol + 2 NAD(+) + H2O = L-histidine + 2 NADH + 3 H(+). Its pathway is amino-acid biosynthesis; L-histidine biosynthesis; L-histidine from 5-phospho-alpha-D-ribose 1-diphosphate: step 2/9. The protein operates within amino-acid biosynthesis; L-histidine biosynthesis; L-histidine from 5-phospho-alpha-D-ribose 1-diphosphate: step 3/9. It participates in amino-acid biosynthesis; L-histidine biosynthesis; L-histidine from 5-phospho-alpha-D-ribose 1-diphosphate: step 9/9. The chain is Histidine biosynthesis trifunctional protein from Saccharomyces cerevisiae (strain ATCC 204508 / S288c) (Baker's yeast).